Consider the following 420-residue polypeptide: Anaerobic glycerol-3-phosphate dehydrogenase subunit B (420 aa).

This sequence belongs to the anaerobic G-3-P dehydrogenase subunit B family. Composed of a catalytic GlpA/B dimer and of membrane bound GlpC. It depends on FMN as a cofactor.

It carries out the reaction a quinone + sn-glycerol 3-phosphate = dihydroxyacetone phosphate + a quinol. Its pathway is polyol metabolism; glycerol degradation via glycerol kinase pathway; glycerone phosphate from sn-glycerol 3-phosphate (anaerobic route): step 1/1. Its function is as follows. Conversion of glycerol 3-phosphate to dihydroxyacetone. Uses fumarate or nitrate as electron acceptor. The chain is Anaerobic glycerol-3-phosphate dehydrogenase subunit B from Pectobacterium carotovorum subsp. carotovorum (strain PC1).